A 423-amino-acid chain; its full sequence is Glycine amidinotransferase, mitochondrial (423 aa).

The transit peptide at 1 to 43 (MLRVRCLRGGSRGAEALHYIGSRLGRTVTGWVQRTFQSTQAAT) directs the protein to the mitochondrion. S46 and S49 each carry phosphoserine. D170 provides a ligand contact to arginine. Active-site residues include D254 and H303. Residues D305, R322, S354, and S355 each coordinate arginine. K385 carries the post-translational modification N6-acetyllysine. C407 acts as the Amidino-cysteine intermediate in catalysis.

This sequence belongs to the amidinotransferase family. Homodimer. In terms of tissue distribution, kidney. Expressed biallelically in placenta.

The protein resides in the mitochondrion inner membrane. It catalyses the reaction L-arginine + glycine = guanidinoacetate + L-ornithine. It carries out the reaction 4-aminobutanoate + L-arginine = 4-guanidinobutanoate + L-ornithine. The catalysed reaction is beta-alanine + L-arginine = 3-guanidinopropanoate + L-ornithine. The enzyme catalyses taurine + L-arginine = taurocyamine + L-ornithine. Its pathway is amine and polyamine biosynthesis; creatine biosynthesis; creatine from L-arginine and glycine: step 1/2. Functionally, transamidinase that catalyzes the transfer of the amidino group of L-arginine onto the amino moiety of acceptor metabolites such as glycine, beta-alanine, gamma-aminobutyric acid (GABA) and taurine yielding the corresponding guanidine derivatives. Catalyzes the rate-limiting step of creatine biosynthesis, namely the transfer of the amidino group from L-arginine to glycine to generate guanidinoacetate, which is then methylated by GAMT to form creatine. Provides creatine as a source for ATP generation in tissues with high energy demands, in particular skeletal muscle, heart and brain. The chain is Glycine amidinotransferase, mitochondrial (GATM) from Sus scrofa (Pig).